Consider the following 78-residue polypeptide: DNA-directed RNA polymerase subunit omega (78 aa).

The protein belongs to the RNA polymerase subunit omega family. As to quaternary structure, in cyanobacteria the RNAP catalytic core is composed of 2 alpha, 1 beta, 1 beta', 1 gamma and 1 omega subunit. When a sigma factor is associated with the core the holoenzyme is formed, which can initiate transcription.

It carries out the reaction RNA(n) + a ribonucleoside 5'-triphosphate = RNA(n+1) + diphosphate. Functionally, promotes RNA polymerase assembly. Latches the N- and C-terminal regions of the beta' subunit thereby facilitating its interaction with the beta and alpha subunits. The protein is DNA-directed RNA polymerase subunit omega of Prochlorococcus marinus subsp. pastoris (strain CCMP1986 / NIES-2087 / MED4).